A 634-amino-acid polypeptide reads, in one-letter code: ATP-dependent zinc metalloprotease FtsH (634 aa).

At 1–5 (MNALK) the chain is on the cytoplasmic side. A helical membrane pass occupies residues 6–26 (NFFIWAIIIGAAIVAFNLFEG). Residues 27-100 (KREFTTKVSL…VANPEPPGGW (74 aa)) lie on the Periplasmic side of the membrane. The helical transmembrane segment at 101 to 121 (LVNVFLSWLPILFFIGIWIFL) threads the bilayer. Residues 122–634 (LRQMSGGGNV…KSEEVKEEVV (513 aa)) are Cytoplasmic-facing. An ATP-binding site is contributed by 195-202 (GEPGVGKT). H418 lines the Zn(2+) pocket. E419 is a catalytic residue. Zn(2+) contacts are provided by H422 and D496. A disordered region spans residues 615–634 (DRKSEENKELKSEEVKEEVV).

This sequence in the central section; belongs to the AAA ATPase family. The protein in the C-terminal section; belongs to the peptidase M41 family. As to quaternary structure, the isolated protease domain (residues 405-634) forms a stable hexamer. Zn(2+) is required as a cofactor.

The protein localises to the cell inner membrane. Acts as a processive, ATP-dependent zinc metallopeptidase for both cytoplasmic and membrane proteins. Plays a role in the quality control of integral membrane proteins. This Aquifex aeolicus (strain VF5) protein is ATP-dependent zinc metalloprotease FtsH.